Here is a 298-residue protein sequence, read N- to C-terminus: Tritrans,polycis-undecaprenyl-diphosphate synthase (geranylgeranyl-diphosphate specific) (298 aa).

Residue Asp-35 is part of the active site. Asp-35 is a binding site for Mg(2+). Substrate-binding positions include 36 to 39 (GNRR), Arg-48, His-52, and 80 to 82 (STE). Asn-83 serves as the catalytic Proton acceptor. Substrate contacts are provided by residues Phe-84, Arg-86, Arg-208, and 214–216 (RIS).

Belongs to the UPP synthase family. In terms of assembly, homodimer. Mg(2+) serves as cofactor.

The catalysed reaction is geranylgeranyl diphosphate + 7 isopentenyl diphosphate = tri-trans,hepta-cis-undecaprenyl diphosphate + 7 diphosphate. Catalyzes the sequential condensation of isopentenyl diphosphate (IPP) with geranylgeranyl diphosphate (GGPP) to yield (2Z,6Z,10Z,14Z,18Z,22Z,26Z,30E,34E,38E)-undecaprenyl diphosphate (tritrans,heptacis-UPP). It is probably the precursor of glycosyl carrier lipids. The protein is Tritrans,polycis-undecaprenyl-diphosphate synthase (geranylgeranyl-diphosphate specific) of Methanosarcina mazei (strain ATCC BAA-159 / DSM 3647 / Goe1 / Go1 / JCM 11833 / OCM 88) (Methanosarcina frisia).